We begin with the raw amino-acid sequence, 317 residues long: Heme A synthase (317 aa).

The Cytoplasmic portion of the chain corresponds to 1 to 6 (MQRSLK). A helical transmembrane segment spans residues 7-27 (WFASATTLAMLFVLIGGALVT). Topologically, residues 28-62 (KTGSGMGCGRSWPLCNGQWVPDHITPELIIELSHR) are extracellular. Cysteine 35 and cysteine 42 are joined by a disulfide. Glutamate 58 is a catalytic residue. Residue histidine 61 coordinates heme o. A helical transmembrane segment spans residues 63-83 (LVSGLAGIMVLILSIWAWRAI). The Cytoplasmic portion of the chain corresponds to 84 to 90 (GHVQETK). The helical transmembrane segment at 91 to 111 (FLAVISFVFLVLQGLIGAAAV) threads the bilayer. The Extracellular portion of the chain corresponds to 112-121 (VWGQSDFVLA). Residues 122–142 (LHFGISLISFAAVLLLTLLIF) traverse the membrane as a helical segment. Histidine 123 contributes to the heme o binding site. At 143–159 (EIDKTFSAASLSLDGKM) the chain is on the cytoplasmic side. Residues 160-180 (RFHIYGITIYSYIVVYTGALV) traverse the membrane as a helical segment. Topologically, residues 181–211 (RHTNASLACPSWPLCAKTRLLPVQFHEWVQM) are extracellular. Cysteine 189 and cysteine 195 form a disulfide bridge. A helical membrane pass occupies residues 212–232 (GHRLAAAVIIIWIAAAAIHAV). A heme b-binding site is contributed by histidine 213. At 233–243 (RHYRRQPVIYY) the chain is on the cytoplasmic side. The helical transmembrane segment at 244-264 (GWLIALLLVLAQMTTGALVVF) threads the bilayer. Residues 265–270 (TQLNLY) lie on the Extracellular side of the membrane. A helical transmembrane segment spans residues 271–291 (IALAHAFFISCLFGVLSYLLL). Histidine 275 is a heme b binding site. Over 292–317 (LALRTRRAPVKAADHSAGEAAPATLK) the chain is Cytoplasmic.

It belongs to the COX15/CtaA family. Type 1 subfamily. As to quaternary structure, interacts with CtaB. The cofactor is heme b.

It localises to the cell membrane. It carries out the reaction Fe(II)-heme o + 2 A + H2O = Fe(II)-heme a + 2 AH2. Its pathway is porphyrin-containing compound metabolism; heme A biosynthesis; heme A from heme O: step 1/1. In terms of biological role, catalyzes the conversion of heme O to heme A by two successive hydroxylations of the methyl group at C8. The first hydroxylation forms heme I, the second hydroxylation results in an unstable dihydroxymethyl group, which spontaneously dehydrates, resulting in the formyl group of heme A. The polypeptide is Heme A synthase (Geobacillus kaustophilus (strain HTA426)).